Consider the following 44-residue polypeptide: Large ribosomal subunit protein bL34 (44 aa).

This sequence belongs to the bacterial ribosomal protein bL34 family.

This chain is Large ribosomal subunit protein bL34, found in Neorickettsia sennetsu (strain ATCC VR-367 / Miyayama) (Ehrlichia sennetsu).